A 593-amino-acid chain; its full sequence is Aspartate--tRNA(Asp/Asn) ligase (593 aa).

L-aspartate is bound at residue Glu-176. The segment at 200 to 203 (QIFK) is aspartate. Residue Arg-222 participates in L-aspartate binding. ATP-binding positions include 222–224 (RDE) and Gln-231. His-450 contributes to the L-aspartate binding site. Glu-490 is a binding site for ATP. Arg-497 provides a ligand contact to L-aspartate. ATP is bound at residue 542–545 (GLDR).

This sequence belongs to the class-II aminoacyl-tRNA synthetase family. Type 1 subfamily. As to quaternary structure, homodimer.

The protein localises to the cytoplasm. The catalysed reaction is tRNA(Asx) + L-aspartate + ATP = L-aspartyl-tRNA(Asx) + AMP + diphosphate. Its function is as follows. Aspartyl-tRNA synthetase with relaxed tRNA specificity since it is able to aspartylate not only its cognate tRNA(Asp) but also tRNA(Asn). Reaction proceeds in two steps: L-aspartate is first activated by ATP to form Asp-AMP and then transferred to the acceptor end of tRNA(Asp/Asn). This is Aspartate--tRNA(Asp/Asn) ligase from Symbiobacterium thermophilum (strain DSM 24528 / JCM 14929 / IAM 14863 / T).